Reading from the N-terminus, the 209-residue chain is Ribosomal RNA large subunit methyltransferase E (209 aa).

S-adenosyl-L-methionine is bound by residues glycine 63, tryptophan 65, aspartate 83, aspartate 99, and aspartate 124. Residue lysine 164 is the Proton acceptor of the active site. In terms of domain architecture, TRAM spans 191-209 (EASRGRSREVYIVATGYKG).

It belongs to the class I-like SAM-binding methyltransferase superfamily. RNA methyltransferase RlmE family.

It is found in the cytoplasm. The enzyme catalyses uridine(2552) in 23S rRNA + S-adenosyl-L-methionine = 2'-O-methyluridine(2552) in 23S rRNA + S-adenosyl-L-homocysteine + H(+). Its function is as follows. Specifically methylates the uridine in position 2552 of 23S rRNA at the 2'-O position of the ribose in the fully assembled 50S ribosomal subunit. The chain is Ribosomal RNA large subunit methyltransferase E from Haemophilus influenzae (strain ATCC 51907 / DSM 11121 / KW20 / Rd).